Consider the following 926-residue polypeptide: DNA topoisomerase 3-alpha (926 aa).

The Toprim domain occupies 10–154 (TVLNVAEKPS…NLFIRRAHFS (145 aa)). 3 residues coordinate Mg(2+): glutamate 16, aspartate 123, and aspartate 125. Positions 172–604 (NQLFAEAVDA…CLQQMKACFL (433 aa)) constitute a Topo IA-type catalytic domain. The interval 219–224 (SYGPCQ) is interaction with DNA. Tyrosine 342 (O-(5'-phospho-DNA)-tyrosine intermediate) is an active-site residue. The segment at 642-670 (CNLCNESDMALRKNRDGNFMVGCMNYPQC) adopts a C4-type zinc-finger fold. Disordered regions lie at residues 740–760 (SRSQ…QGSN) and 775–806 (HAST…TVSC). Positions 750–760 (TAPSNNIQGSN) are enriched in polar residues. A CCHC-type 1 zinc finger spans residues 767–782 (CIHCQQRGHASTNCPS). Zn(2+) is bound by residues cysteine 806, cysteine 809, cysteine 831, and cysteine 836. The GRF-type zinc finger occupies 806 to 845 (CNTCGSQCVLRTANTEANRGRQFFSCPTQGCSFFAWEDSI). A disordered region spans residues 849–890 (SGNATTGSNSGGSGRRGSRGRGRGGRGGQSSGGRRGSGTSFV). The segment covering 873–884 (GRGGQSSGGRRG) has biased composition (gly residues). The segment at 901-917 (RCFSCGDPSHFANACPN) adopts a CCHC-type 2 zinc-finger fold.

The protein belongs to the type IA topoisomerase family. In terms of assembly, component of the RMI complex, containing at least TOP3A and RMI1. The RMI complex interacts with RECQL4A. Mg(2+) serves as cofactor.

It catalyses the reaction ATP-independent breakage of single-stranded DNA, followed by passage and rejoining.. Functionally, releases the supercoiling and torsional tension of DNA introduced during the DNA replication and transcription by transiently cleaving and rejoining one strand of the DNA duplex. Introduces a single-strand break via transesterification at a target site in duplex DNA. The scissile phosphodiester is attacked by the catalytic tyrosine of the enzyme, resulting in the formation of a DNA-(5'-phosphotyrosyl)-enzyme intermediate and the expulsion of a 3'-OH DNA strand. The free DNA strand then undergoes passage around the unbroken strand thus removing DNA supercoils. Finally, in the religation step, the DNA 3'-OH attacks the covalent intermediate to expel the active-site tyrosine and restore the DNA phosphodiester backbone. Essential component of the RMI complex, a complex that plays an important role in the resolution step of homologous recombination, in a process called Holliday Junction dissolution, to limit DNA crossover formation in cells. Together with RMI1, is essential for the resolution of meiotic recombination intermediates, a step that prevents entanglement of the parental chromosomes. May have DNA decatenation activity. This Arabidopsis thaliana (Mouse-ear cress) protein is DNA topoisomerase 3-alpha (TOP3A).